We begin with the raw amino-acid sequence, 105 residues long: RxLR effector protein PITG_18670 (105 aa).

An N-terminal signal peptide occupies residues 1-21 (MRSIFYFALAFAALTCSNASA). The RxLR-dEER motif lies at 39–57 (RSLRVAGQEVARGDRGEEI).

It belongs to the RxLR effector family.

It is found in the secreted. The protein localises to the host nucleus. Its subcellular location is the host nucleolus. The protein resides in the host cytoplasm. Its function is as follows. Effector that enhances P.infestans colonization of Nicotiana benthamiana leaves. The sequence is that of RxLR effector protein PITG_18670 from Phytophthora infestans (strain T30-4) (Potato late blight agent).